We begin with the raw amino-acid sequence, 206 residues long: Outer-membrane lipoprotein LolB (206 aa).

Positions 1–18 are cleaved as a signal peptide; that stretch reads MKTFKFFTALFATAILTA. The N-palmitoyl cysteine moiety is linked to residue Cys-19. Cys-19 carries S-diacylglycerol cysteine lipidation.

It belongs to the LolB family. As to quaternary structure, monomer.

It is found in the cell outer membrane. Functionally, plays a critical role in the incorporation of lipoproteins in the outer membrane after they are released by the LolA protein. The chain is Outer-membrane lipoprotein LolB from Haemophilus influenzae (strain PittGG).